The following is a 121-amino-acid chain: Natriuretic peptides B (121 aa).

Residues 1 to 26 (MDLLKVLSQMILFLLFLYLSPLGGHS) form the signal peptide. Positions 61-89 (LKDQGLTKEHPKRVLRSQGSTLRVQQRPQ) are disordered. Residues 77-89 (SQGSTLRVQQRPQ) are compositionally biased toward polar residues. Cysteines 99 and 115 form a disulfide.

It belongs to the natriuretic peptide family. The precursor molecule is proteolytically cleaved by the endoprotease Furin to produce brain natriuretic peptide 45. May undergo further proteolytic cleavage by various proteases such as DPP4, MME and possibly FAP, to give rise to a variety of shorter peptides. May be cleaved at Ser-91 by the prolyl endopeptidase FAP (seprase) activity (in vitro). May be degraded by IDE. During IDE degradation, the resulting products initially increase the activation of NPR1 and can also stimulate NPR2 to produce cGMP before the fragments are completely degraded and inactivated by IDE (in vitro). Expressed abundantly in the ventricle, and in a lesser extent in the atrium (at protein level).

The protein localises to the secreted. Cardiac hormone that plays a key role in mediating cardio-renal homeostasis. May also function as a paracrine antifibrotic factor in the heart. Acts by specifically binding and stimulating NPR1 to produce cGMP, which in turn activates effector proteins that drive various biological responses. Likely involved in regulating the extracellular fluid volume and maintaining the fluid-electrolyte balance through natriuresis, diuresis, kaluresis and chloruresis. This is Natriuretic peptides B (Nppb) from Mus musculus (Mouse).